The primary structure comprises 382 residues: Galactokinase (382 aa).

Residue 34-37 (EHTD) participates in substrate binding. Position 124–130 (124–130 (GAGLSSS)) interacts with ATP. Mg(2+) contacts are provided by serine 130 and glutamate 162. The active-site Proton acceptor is the aspartate 174. Position 223 (tyrosine 223) interacts with substrate.

Belongs to the GHMP kinase family. GalK subfamily.

The protein resides in the cytoplasm. It carries out the reaction alpha-D-galactose + ATP = alpha-D-galactose 1-phosphate + ADP + H(+). It participates in carbohydrate metabolism; galactose metabolism. Functionally, catalyzes the transfer of the gamma-phosphate of ATP to D-galactose to form alpha-D-galactose-1-phosphate (Gal-1-P). The polypeptide is Galactokinase (Escherichia coli (strain SMS-3-5 / SECEC)).